Consider the following 343-residue polypeptide: LRP2-binding protein (343 aa).

The stretch at 58-91 (SQATFLLGQLHYVQGCYAEAELIFDRIKDKDPQA) is one TPR repeat. Sel1-like repeat units lie at residues 92–124 (LYQLAVIYYDGLGTKEDLGRAVEYMGRVAFWDS), 132–167 (YAALYNLGQAYLEGFGVQASSSEAERLWLLAADNGN), 172–205 (VKAQSALGMFYSRPESLDLRKAFFWHSQACGNGS), 206–241 (LESQAALGLMYLYGHGVQRDSDSALFCLKEAAERGS), 242–273 (VYAQGHLTACYYRRQLYSRAAALGQRVCEYKD), and 293–328 (AIGMFYYARCLHLGRGVPQNRDKAKHYCTQAVRIDP).

It localises to the cytoplasm. Functionally, may act as an adapter that regulates LRP2 function. The chain is LRP2-binding protein (lrp2bp) from Danio rerio (Zebrafish).